Here is a 191-residue protein sequence, read N- to C-terminus: Pyridoxal 5'-phosphate synthase subunit PdxT (191 aa).

Position 52 to 54 (52 to 54) interacts with L-glutamine; sequence GES. Catalysis depends on Cys81, which acts as the Nucleophile. Residues Arg108 and 136-137 each bind L-glutamine; that span reads IR. Residues His172 and Glu174 each act as charge relay system in the active site.

The protein belongs to the glutaminase PdxT/SNO family. As to quaternary structure, in the presence of PdxS, forms a dodecamer of heterodimers. Only shows activity in the heterodimer.

It catalyses the reaction aldehydo-D-ribose 5-phosphate + D-glyceraldehyde 3-phosphate + L-glutamine = pyridoxal 5'-phosphate + L-glutamate + phosphate + 3 H2O + H(+). The catalysed reaction is L-glutamine + H2O = L-glutamate + NH4(+). It participates in cofactor biosynthesis; pyridoxal 5'-phosphate biosynthesis. Its function is as follows. Catalyzes the hydrolysis of glutamine to glutamate and ammonia as part of the biosynthesis of pyridoxal 5'-phosphate. The resulting ammonia molecule is channeled to the active site of PdxS. This is Pyridoxal 5'-phosphate synthase subunit PdxT from Actinobacillus pleuropneumoniae serotype 5b (strain L20).